Reading from the N-terminus, the 602-residue chain is PEX5-related protein (602 aa).

Disordered regions lie at residues 94–140 (VSQT…PETS) and 167–206 (HLMAERKSCSSRAGSKELLWSSEHRSQPELSTGKSALNSE). Phosphoserine occurs at positions 181, 229, 233, and 237. 3 TPR repeats span residues 302–335 (WPGAFEEGLKRLKEGDLPVTILFMEAAILQDPGN), 336–369 (AEAWQFLGITQAENENEQAAIVALQRCLELQPNN), and 371–403 (KALMALAVSYTNTSHQQDACEALKNWIKQNPKY). Phosphoserine is present on residues Ser-421 and Ser-423. 3 TPR repeats span residues 450 to 483 (PDLQTGLGVLFHLSGEFNRAIDAFNAALTVRPED), 485 to 517 (SLWNRLGATLANGDRSEEAVEAYTRALEIQPGF), and 519 to 551 (RSRYNLGISCINLGAYREAVSNFLTALSLQRKS).

Belongs to the peroxisomal targeting signal receptor family. Forms an obligate 4:4 complex with HCN2. Interacts with RAB8B. Interacts with HCN3. Interacts with HCN4 with a 4:4 HCN4:PEX5L stoichiometry; reduces the effects of cAMP on the voltage-dependence and rate of activation of HCN4. As to expression, brain specific.

It is found in the cytoplasm. Its subcellular location is the membrane. Accessory subunit of hyperpolarization-activated cyclic nucleotide-gated (HCN) channels, regulating their cell-surface expression and cyclic nucleotide dependence. This is PEX5-related protein (Pex5l) from Rattus norvegicus (Rat).